The primary structure comprises 413 residues: Patatin-like protein 3 (413 aa).

Residues Leu-54 to Ile-245 enclose the PNPLA domain. A GGXR motif is present at residues Gly-58 to Arg-61. The active-site Nucleophile is the Ser-100. The tract at residues Glu-384–Pro-413 is disordered.

Belongs to the patatin family.

In terms of biological role, possesses non-specific lipolytic acyl hydrolase (LAH) activity. Hydrolyzes phospholipids as well as galactolipids. May play a role in disease resistance. The chain is Patatin-like protein 3 (PLP3) from Oryza sativa subsp. indica (Rice).